The chain runs to 921 residues: Extended synaptotagmin-2 (921 aa).

The Cytoplasmic segment spans residues 1 to 103; that stretch reads MTANRDAALS…RPGGPENPGG (103 aa). The interval 1 to 103 is disordered; the sequence is MTANRDAALS…RPGGPENPGG (103 aa). Positions 58–75 are enriched in basic residues; it reads GARRRAKTARGLRGHRQR. A helical membrane pass occupies residues 104 to 124; that stretch reads VLSVELPGLLAQLARSFALLL. Residues 125–127 lie on the Lumenal side of the membrane; it reads PVY. Residues 128–148 form a helical membrane-spanning segment; the sequence is ALGYLGLSFSWVLLALALLAW. Topologically, residues 149–921 are cytoplasmic; that stretch reads CRRSRGLKAL…EDGTRPQAMT (773 aa). Residues 191-370 form the SMP-LTD domain; the sequence is DTERAEWLNK…LPNRITVPLV (180 aa). 2 C2 domains span residues 369–489 and 514–639; these read LVSE…DEWF and NLDK…QLSN. Residues K400, D401, D413, D460, E461, D462, D464, D466, and D467 each coordinate Ca(2+). The segment at 660–754 is disordered; that stretch reads RERPPDHQHS…GHISVKEPTP (95 aa). Phosphoserine is present on residues S691 and S693. Residue T705 is modified to Phosphothreonine. Phosphoserine occurs at positions 736, 738, 739, 743, 748, 755, 758, and 761. In terms of domain architecture, C2 3 spans 786 to 908; sequence PLGQIQLTIR…ELAKGWTQWY (123 aa). Residues 833-840 form a required for phosphatidylinositol 4,5-bisphosphate-dependent location at the cell membrane region; the sequence is KRRSGRRK.

The protein belongs to the extended synaptotagmin family. As to quaternary structure, homodimer. Interacts with ESYT1 and ESYT3. Interacts with FGFR1 that has been activated by FGF1 binding. Interacts with the AP-2 complex; identified in a complex with the AP-2 complex and FGFR1. As to expression, widely expressed with high level in cerebellum.

It localises to the cell membrane. The protein resides in the endoplasmic reticulum membrane. Its function is as follows. Tethers the endoplasmic reticulum to the cell membrane and promotes the formation of appositions between the endoplasmic reticulum and the cell membrane. Binds glycerophospholipids in a barrel-like domain and may play a role in cellular lipid transport. Plays a role in FGF signaling via its role in the rapid internalization of FGFR1 that has been activated by FGF1 binding; this occurs most likely via the AP-2 complex. Promotes the localization of SACM1L at endoplasmic reticulum-plasma membrane contact sites (EPCS). The sequence is that of Extended synaptotagmin-2 from Homo sapiens (Human).